Here is a 560-residue protein sequence, read N- to C-terminus: 2-succinyl-5-enolpyruvyl-6-hydroxy-3-cyclohexene-1-carboxylate synthase (560 aa).

Belongs to the TPP enzyme family. MenD subfamily. As to quaternary structure, homodimer. It depends on Mg(2+) as a cofactor. Requires Mn(2+) as cofactor. Thiamine diphosphate serves as cofactor.

It catalyses the reaction isochorismate + 2-oxoglutarate + H(+) = 5-enolpyruvoyl-6-hydroxy-2-succinyl-cyclohex-3-ene-1-carboxylate + CO2. It functions in the pathway quinol/quinone metabolism; 1,4-dihydroxy-2-naphthoate biosynthesis; 1,4-dihydroxy-2-naphthoate from chorismate: step 2/7. It participates in quinol/quinone metabolism; menaquinone biosynthesis. Its function is as follows. Catalyzes the thiamine diphosphate-dependent decarboxylation of 2-oxoglutarate and the subsequent addition of the resulting succinic semialdehyde-thiamine pyrophosphate anion to isochorismate to yield 2-succinyl-5-enolpyruvyl-6-hydroxy-3-cyclohexene-1-carboxylate (SEPHCHC). This chain is 2-succinyl-5-enolpyruvyl-6-hydroxy-3-cyclohexene-1-carboxylate synthase, found in Pectobacterium carotovorum subsp. carotovorum (strain PC1).